The sequence spans 409 residues: Diels-Alderase ucsH (409 aa).

Residues 386-406 (IYFFICMLLAVVTFGYINILE) traverse the membrane as a helical segment.

This sequence belongs to the Diels-Alderase family.

It localises to the membrane. Its pathway is mycotoxin biosynthesis. Functionally, diels-Alderase; part of the gene cluster that mediates the biosynthesis of UCS1025A, a member of the pyrrolizidinone family that acts as a strong telomerase inhibitor and displays potent antibacterial and antitumor properties. These compounds share a hemiaminal-containing pyrrolizidinone core fused with a gamma-lactone, giving a furopyrrolizidine that is connected to a decalin fragment. The polyketide synthase module (PKS) of the PKS-NRPS ucsA is responsible for the synthesis of the polyketide backbone via the condensation of an acetyl-CoA starter unit with 6 malonyl-CoA units. The downstream nonribosomal peptide synthetase (NRPS) module then amidates the carboxyl end of the polyketide with a 2S,3S-methylproline derived from L-isoleucine by the 2-oxoglutarate-dependent dioxygenase ucsF which converts L-isoleucine to (4S,5S)-4-methylpyrroline-5-carboxylate that is further converted to 2S,3S-methylproline by the pyrroline-5-carboxylate reductase ucsG. Reductive release of the completed aminoacyl polyketide from the assembly line can form the 3-pyrrolin-2-one structure via an intramolecular Knoevenagel reaction. Because ucsA lacks a designated enoylreductase (ER) domain, the required activity is provided the enoyl reductase ucsL. This keto acyclic precursor is the substrate of the Diels-Alderase ucsH, that catalyzes the Diels-Alder cycloaddition. Oxidation of the 3S-methyl group to a carboxylate by the cytochrome P450 monooxygenase ucsK allows an oxa-Michael cyclization that might involve the reductase/dehydrogenase ucsI and which furnishes the furopyrrolizidine. The oxidase ucsJ likely plays a critical role in stereoselective reduction of the C5-C6 double bond to afford the required R-configured carboxylate group. Further enolization and oxidation at C5 by an unidentified enzyme affords the last intermediate that can undergo oxa-Michael cyclization to yield UCS1025A. The chain is Diels-Alderase ucsH from Acremonium sp.